A 353-amino-acid polypeptide reads, in one-letter code: tRNA-specific 2-thiouridylase MnmA (353 aa).

Residues 6–13 (GMSGGVDS) and leucine 32 each bind ATP. Cysteine 99 acts as the Nucleophile in catalysis. Cysteine 99 and cysteine 197 are oxidised to a cystine. Glycine 124 is an ATP binding site. An interaction with tRNA region spans residues 147–149 (KDQ). Residue cysteine 197 is the Cysteine persulfide intermediate of the active site. The interval 303 to 304 (RY) is interaction with tRNA.

It belongs to the MnmA/TRMU family.

Its subcellular location is the cytoplasm. The enzyme catalyses S-sulfanyl-L-cysteinyl-[protein] + uridine(34) in tRNA + AH2 + ATP = 2-thiouridine(34) in tRNA + L-cysteinyl-[protein] + A + AMP + diphosphate + H(+). Functionally, catalyzes the 2-thiolation of uridine at the wobble position (U34) of tRNA, leading to the formation of s(2)U34. The polypeptide is tRNA-specific 2-thiouridylase MnmA (Persephonella marina (strain DSM 14350 / EX-H1)).